The following is a 212-amino-acid chain: Peptide methionine sulfoxide reductase MsrA (212 aa).

Residue C52 is part of the active site.

The protein belongs to the MsrA Met sulfoxide reductase family.

It carries out the reaction L-methionyl-[protein] + [thioredoxin]-disulfide + H2O = L-methionyl-(S)-S-oxide-[protein] + [thioredoxin]-dithiol. The catalysed reaction is [thioredoxin]-disulfide + L-methionine + H2O = L-methionine (S)-S-oxide + [thioredoxin]-dithiol. Functionally, has an important function as a repair enzyme for proteins that have been inactivated by oxidation. Catalyzes the reversible oxidation-reduction of methionine sulfoxide in proteins to methionine. This is Peptide methionine sulfoxide reductase MsrA from Yersinia enterocolitica serotype O:8 / biotype 1B (strain NCTC 13174 / 8081).